We begin with the raw amino-acid sequence, 416 residues long: Casein kinase I isoform epsilon (416 aa).

A Protein kinase domain is found at Tyr-9 to Phe-277. Residues Ile-15–Ile-23 and Lys-38 each bind ATP. The active-site Proton acceptor is Asp-128. Positions Pro-301–Gly-318 are enriched in basic and acidic residues. The disordered stretch occupies residues Pro-301–Lys-416. A phosphoserine mark is found at Ser-343 and Ser-354. The segment covering Thr-351 to Arg-365 has biased composition (polar residues). Thr-362 bears the Phosphothreonine mark. Ser-363 carries the post-translational modification Phosphoserine. Arg-382 carries the omega-N-methylarginine modification. A phosphoserine mark is found at Ser-389, Ser-405, and Ser-408.

This sequence belongs to the protein kinase superfamily. CK1 Ser/Thr protein kinase family. Casein kinase I subfamily. In terms of assembly, monomer. Component of the circadian core oscillator, which includes the CRY proteins, CLOCK, or NPAS2, ARTNL/BMAL1 or ARTNL2/BMAL2, CSNK1D and/or CSNK1E, TIMELESS and the PER proteins. Interacts with ANKRD6. Interacts with PER1. Interacts with DBNDD2, LRP5, LRP6 and SOCS3. Interacts with SNAI1 (via zinc fingers). Interacts with DDX3X; this interaction greatly enhances CSNK1E affinity for ATP and DVL2 phosphorylation, but inhibits DDX3X ATPase/helicase activity. In the presence of RNA, the interaction is decreased. Interacts with FAM83A, FAM83B, FAM83E and FAM83H (via DUF1669). Post-translationally, autophosphorylated. Partially dephosphorylated by PPP5C. May be dephosphorylated by PP1. Expressed in all tissues examined, including brain, heart, lung, liver, pancreas, kidney, placenta and skeletal muscle. Expressed in monocytes and lymphocytes but not in granulocytes.

Its subcellular location is the cytoplasm. It is found in the nucleus. It catalyses the reaction L-seryl-[protein] + ATP = O-phospho-L-seryl-[protein] + ADP + H(+). The catalysed reaction is L-threonyl-[protein] + ATP = O-phospho-L-threonyl-[protein] + ADP + H(+). With respect to regulation, phosphorylation leads to a decrease in the catalytic activity. Casein kinases are operationally defined by their preferential utilization of acidic proteins such as caseins as substrates. Participates in Wnt signaling. Phosphorylates DVL1. Phosphorylates DVL2. Phosphorylates NEDD9/HEF1. Central component of the circadian clock. In balance with PP1, determines the circadian period length, through the regulation of the speed and rhythmicity of PER1 and PER2 phosphorylation. Controls PER1 and PER2 nuclear transport and degradation. Inhibits cytokine-induced granuloytic differentiation. This is Casein kinase I isoform epsilon (Csnk1e) from Mus musculus (Mouse).